A 341-amino-acid polypeptide reads, in one-letter code: Mytilin-2 (341 aa).

A signal peptide spans 1-24; the sequence is MFKQSYQLCLVFLLFVCFYQSVKG.

As to expression, component of the organic matrix of calcified shell layers like nacre and prisms.

Its subcellular location is the secreted. This is Mytilin-2 from Mytilus californianus (California mussel).